The sequence spans 172 residues: Cell division protein SepF (172 aa).

The segment at 16–78 (DGDEHYEPQP…RAASNRDDSS (63 aa)) is disordered. Positions 17 to 48 (GDEHYEPQPEGKQTRPAQKNEEYVDQEIRHTE) are enriched in basic and acidic residues.

The protein belongs to the SepF family. As to quaternary structure, homodimer. Interacts with FtsZ.

The protein localises to the cytoplasm. Functionally, cell division protein that is part of the divisome complex and is recruited early to the Z-ring. Probably stimulates Z-ring formation, perhaps through the cross-linking of FtsZ protofilaments. Its function overlaps with FtsA. This is Cell division protein SepF from Renibacterium salmoninarum (strain ATCC 33209 / DSM 20767 / JCM 11484 / NBRC 15589 / NCIMB 2235).